We begin with the raw amino-acid sequence, 259 residues long: Isoprenyl transferase (259 aa).

D30 is a catalytic residue. A Mg(2+)-binding site is contributed by D30. Substrate is bound by residues 31–34 (GNGR), W35, R43, H47, and 75–77 (STE). The active-site Proton acceptor is the N78. Substrate-binding positions include W79, R81, R198, and 204 to 206 (RIS). A Mg(2+)-binding site is contributed by E217.

It belongs to the UPP synthase family. As to quaternary structure, homodimer. The cofactor is Mg(2+).

Functionally, catalyzes the condensation of isopentenyl diphosphate (IPP) with allylic pyrophosphates generating different type of terpenoids. This is Isoprenyl transferase from Caulobacter vibrioides (strain ATCC 19089 / CIP 103742 / CB 15) (Caulobacter crescentus).